Reading from the N-terminus, the 226-residue chain is Cytidylate kinase (226 aa).

Position 11 to 19 (11 to 19) interacts with ATP; it reads GPAGAGKST.

It belongs to the cytidylate kinase family. Type 1 subfamily.

It is found in the cytoplasm. The enzyme catalyses CMP + ATP = CDP + ADP. The catalysed reaction is dCMP + ATP = dCDP + ADP. The protein is Cytidylate kinase of Pelotomaculum thermopropionicum (strain DSM 13744 / JCM 10971 / SI).